The following is a 2828-amino-acid chain: Matrix-remodeling-associated protein 5 (2828 aa).

Residues 1-26 (MPKRAHWGALSVVLILLWGHPRVALA) form the signal peptide. The LRRNT domain occupies 27–55 (CPHPCACYVPSEVHCTFRSLASVPAGIAK). 6 LRR repeats span residues 56 to 77 (HVER…SFAG), 80 to 101 (KLEL…ALRD), 104 to 125 (SLQV…TLQG), 128 to 149 (NLMR…AFNG), 152 to 173 (SLRL…TFST), and 184 to 205 (TIRH…MLRN). Residues 217-277 (NPWTCDCEMR…HKLKDMTCLK (61 aa)) form the LRRCT domain. Asparagine 287 and asparagine 321 each carry an N-linked (GlcNAc...) asparagine glycan. Ig-like C2-type domains lie at 481-571 (PSGA…YRVL) and 575-669 (PSTQ…ITVT). 2 disulfides stabilise this stretch: cysteine 501–cysteine 555 and cysteine 599–cysteine 651. N-linked (GlcNAc...) asparagine glycosylation is present at asparagine 633. Disordered regions lie at residues 671–715 (KGSG…RRLL), 933–962 (KPTH…EYEP), 1068–1190 (QGGN…APDI), 1204–1275 (AWVD…SSET), and 1367–1389 (EESS…AQPG). A compositionally biased stretch (acidic residues) spans 695-708 (IVEDEGGSGMGDEE). O-linked (Xyl...) (chondroitin sulfate) serine glycosylation is present at serine 702. The segment covering 951-962 (SSPEPTSSEYEP) has biased composition (low complexity). Residues 1090 to 1107 (SKSITLPDSTLGIMSSMS) show a composition bias toward polar residues. Positions 1146–1168 (PSRRRPNGRRRLRPNKFRHRHKQ) are enriched in basic residues. Polar residues-rich tracts occupy residues 1169 to 1190 (TPPT…APDI) and 1204 to 1214 (AWVDNTVNTPK). Positions 1229–1243 (TPRRKHGKRPNKHRY) are enriched in basic residues. N-linked (GlcNAc...) asparagine glycosylation occurs at asparagine 1403. An LRR 7 repeat occupies 1410 to 1434 (LKELEDVDFTSEFLSSLTVSTPFHQ). Disordered regions lie at residues 1479 to 1499 (QNHT…PSTI), 1536 to 1566 (NPET…SDQD), 1579 to 1603 (QVFG…HASH), 1669 to 1689 (STTI…KFTD), and 1700 to 1719 (KVFG…KPPS). A compositionally biased stretch (polar residues) spans 1542–1566 (TPVNNEGTQHMSGPNELSTPSSDQD). N-linked (GlcNAc...) asparagine glycosylation occurs at asparagine 1735. 10 Ig-like C2-type domains span residues 1853 to 1946 (PQIL…LSVT), 1950 to 2041 (PQIL…IRLH), 2046 to 2140 (PPVI…LNVQ), 2146 to 2239 (ARIT…VDVV), 2242 to 2343 (PAKI…KVVT), 2345 to 2432 (PATI…KTVW), 2440 to 2534 (PKIN…LQLT), 2542 to 2630 (PIFH…RLVS), 2637 to 2722 (PEAN…PSVT), and 2733 to 2828 (PRIT…IHVF). Intrachain disulfides connect cysteine 1875/cysteine 1928 and cysteine 1972/cysteine 2025. 2 N-linked (GlcNAc...) asparagine glycosylation sites follow: asparagine 2007 and asparagine 2056. Disulfide bonds link cysteine 2069–cysteine 2122, cysteine 2168–cysteine 2221, cysteine 2265–cysteine 2324, cysteine 2368–cysteine 2418, cysteine 2466–cysteine 2518, cysteine 2564–cysteine 2616, cysteine 2659–cysteine 2711, and cysteine 2755–cysteine 2810. A glycan (N-linked (GlcNAc...) asparagine) is linked at asparagine 2693.

As to expression, detected in placenta (at protein level). Detected in cerebrospinal fluid and fibroblasts (at protein level). Highly expressed in kidney, also detected on liver and spleen. Expressed by proximal tubular cells of the kidney (at protein level). Expression highly increases during chronic kidney disease and autosomal dominant polycystic kidney disease, where is detected in cysts.

It is found in the secreted. Functionally, in kidney, has anti-inflammatory and anti-fibrotic properties by limiting the induction of chemokines, fibronectin and collagen expression in response to TGB1 and pro-inflammatory stimuli. The sequence is that of Matrix-remodeling-associated protein 5 (MXRA5) from Homo sapiens (Human).